The following is a 464-amino-acid chain: 3-isopropylmalate dehydratase large subunit (464 aa).

[4Fe-4S] cluster is bound by residues Cys-337, Cys-397, and Cys-400.

It belongs to the aconitase/IPM isomerase family. LeuC type 1 subfamily. As to quaternary structure, heterodimer of LeuC and LeuD. It depends on [4Fe-4S] cluster as a cofactor.

The catalysed reaction is (2R,3S)-3-isopropylmalate = (2S)-2-isopropylmalate. It participates in amino-acid biosynthesis; L-leucine biosynthesis; L-leucine from 3-methyl-2-oxobutanoate: step 2/4. Its function is as follows. Catalyzes the isomerization between 2-isopropylmalate and 3-isopropylmalate, via the formation of 2-isopropylmaleate. This chain is 3-isopropylmalate dehydratase large subunit, found in Bacillus mycoides (strain KBAB4) (Bacillus weihenstephanensis).